A 153-amino-acid polypeptide reads, in one-letter code: Succinate dehydrogenase assembly factor 2, mitochondrial (153 aa).

Belongs to the SDHAF2 family. Interacts with the flavoprotein subunit within the SDH catalytic dimer.

The protein resides in the mitochondrion matrix. Its function is as follows. Plays an essential role in the assembly of succinate dehydrogenase (SDH), an enzyme complex (also referred to as respiratory complex II) that is a component of both the tricarboxylic acid (TCA) cycle and the mitochondrial electron transport chain, and which couples the oxidation of succinate to fumarate with the reduction of ubiquinone (coenzyme Q) to ubiquinol. Required for flavinylation (covalent attachment of FAD) of the flavoprotein subunit of the SDH catalytic dimer. The protein is Succinate dehydrogenase assembly factor 2, mitochondrial of Candida glabrata (strain ATCC 2001 / BCRC 20586 / JCM 3761 / NBRC 0622 / NRRL Y-65 / CBS 138) (Yeast).